Here is a 446-residue protein sequence, read N- to C-terminus: Maltoporin (446 aa).

The signal sequence occupies residues 1-25 (MMITLRKLPLAVAVAAGVMSAQAMA).

It belongs to the porin LamB (TC 1.B.3) family. In terms of assembly, homotrimer formed of three 18-stranded antiparallel beta-barrels, containing three independent channels.

It localises to the cell outer membrane. The catalysed reaction is beta-maltose(in) = beta-maltose(out). In terms of biological role, involved in the transport of maltose and maltodextrins. In Escherichia coli O127:H6 (strain E2348/69 / EPEC), this protein is Maltoporin.